The primary structure comprises 303 residues: Probable 5-dehydro-4-deoxyglucarate dehydratase (303 aa).

This sequence belongs to the DapA family.

It catalyses the reaction 5-dehydro-4-deoxy-D-glucarate + H(+) = 2,5-dioxopentanoate + CO2 + H2O. Its pathway is carbohydrate acid metabolism; D-glucarate degradation; 2,5-dioxopentanoate from D-glucarate: step 2/2. This is Probable 5-dehydro-4-deoxyglucarate dehydratase from Azotobacter vinelandii (strain DJ / ATCC BAA-1303).